We begin with the raw amino-acid sequence, 417 residues long: Serine hydroxymethyltransferase (417 aa).

Residues Leu-121 and 125 to 127 (GHL) contribute to the (6S)-5,6,7,8-tetrahydrofolate site. N6-(pyridoxal phosphate)lysine is present on Lys-229. 355–357 (SPF) lines the (6S)-5,6,7,8-tetrahydrofolate pocket.

This sequence belongs to the SHMT family. Homodimer. The cofactor is pyridoxal 5'-phosphate.

It is found in the cytoplasm. The enzyme catalyses (6R)-5,10-methylene-5,6,7,8-tetrahydrofolate + glycine + H2O = (6S)-5,6,7,8-tetrahydrofolate + L-serine. It functions in the pathway one-carbon metabolism; tetrahydrofolate interconversion. Its pathway is amino-acid biosynthesis; glycine biosynthesis; glycine from L-serine: step 1/1. Functionally, catalyzes the reversible interconversion of serine and glycine with tetrahydrofolate (THF) serving as the one-carbon carrier. This reaction serves as the major source of one-carbon groups required for the biosynthesis of purines, thymidylate, methionine, and other important biomolecules. Also exhibits THF-independent aldolase activity toward beta-hydroxyamino acids, producing glycine and aldehydes, via a retro-aldol mechanism. In Salmonella choleraesuis (strain SC-B67), this protein is Serine hydroxymethyltransferase.